The following is a 393-amino-acid chain: 1-deoxy-D-xylulose 5-phosphate reductoisomerase (393 aa).

Threonine 10, glycine 11, serine 12, isoleucine 13, glutamine 38, and asparagine 124 together coordinate NADPH. Residue lysine 125 participates in 1-deoxy-D-xylulose 5-phosphate binding. Glutamate 126 serves as a coordination point for NADPH. A Mn(2+)-binding site is contributed by aspartate 150. 4 residues coordinate 1-deoxy-D-xylulose 5-phosphate: serine 151, glutamate 152, serine 179, and histidine 202. Glutamate 152 contacts Mn(2+). Glycine 208 provides a ligand contact to NADPH. Residues serine 215, asparagine 220, lysine 221, and glutamate 224 each contribute to the 1-deoxy-D-xylulose 5-phosphate site. Glutamate 224 is a Mn(2+) binding site.

Belongs to the DXR family. It depends on Mg(2+) as a cofactor. Mn(2+) serves as cofactor.

It catalyses the reaction 2-C-methyl-D-erythritol 4-phosphate + NADP(+) = 1-deoxy-D-xylulose 5-phosphate + NADPH + H(+). It functions in the pathway isoprenoid biosynthesis; isopentenyl diphosphate biosynthesis via DXP pathway; isopentenyl diphosphate from 1-deoxy-D-xylulose 5-phosphate: step 1/6. Its function is as follows. Catalyzes the NADPH-dependent rearrangement and reduction of 1-deoxy-D-xylulose-5-phosphate (DXP) to 2-C-methyl-D-erythritol 4-phosphate (MEP). The sequence is that of 1-deoxy-D-xylulose 5-phosphate reductoisomerase from Ralstonia nicotianae (strain ATCC BAA-1114 / GMI1000) (Ralstonia solanacearum).